Reading from the N-terminus, the 493-residue chain is Telomere-binding protein subunit alpha (493 aa).

The interval 1–30 (MSSAKRSTSRVSKKKAAPAKDGAPKKREQS) is disordered. Basic residues predominate over residues 7 to 17 (STSRVSKKKAA).

It belongs to the telombin family. In terms of assembly, heterodimer of an alpha and a beta subunit.

It localises to the nucleus. It is found in the chromosome. The protein localises to the telomere. Functionally, may function as protective capping of the single-stranded telomeric overhang. May also participate in telomere length regulation during DNA replication. This is Telomere-binding protein subunit alpha (STY56V) from Stylonychia mytilus (Ciliate).